A 64-amino-acid polypeptide reads, in one-letter code: Sperm protamine P1 (64 aa).

Positions 1 to 64 (MARYRHSRSR…SRRRRRRYYY (64 aa)) are disordered.

Belongs to the protamine P1 family. As to expression, testis.

It is found in the nucleus. The protein resides in the chromosome. In terms of biological role, protamines substitute for histones in the chromatin of sperm during the haploid phase of spermatogenesis. They compact sperm DNA into a highly condensed, stable and inactive complex. This chain is Sperm protamine P1 (PRM1), found in Hypsiprymnodon moschatus (Musky rat kangaroo).